Here is a 267-residue protein sequence, read N- to C-terminus: Phosphatidylserine decarboxylase proenzyme (267 aa).

Catalysis depends on charge relay system; for autoendoproteolytic cleavage activity residues Asp-78, His-132, and Ser-236. The active-site Schiff-base intermediate with substrate; via pyruvic acid; for decarboxylase activity is the Ser-236. Ser-236 is subject to Pyruvic acid (Ser); by autocatalysis.

It belongs to the phosphatidylserine decarboxylase family. PSD-B subfamily. Prokaryotic type I sub-subfamily. Heterodimer of a large membrane-associated beta subunit and a small pyruvoyl-containing alpha subunit. Pyruvate is required as a cofactor. Is synthesized initially as an inactive proenzyme. Formation of the active enzyme involves a self-maturation process in which the active site pyruvoyl group is generated from an internal serine residue via an autocatalytic post-translational modification. Two non-identical subunits are generated from the proenzyme in this reaction, and the pyruvate is formed at the N-terminus of the alpha chain, which is derived from the carboxyl end of the proenzyme. The autoendoproteolytic cleavage occurs by a canonical serine protease mechanism, in which the side chain hydroxyl group of the serine supplies its oxygen atom to form the C-terminus of the beta chain, while the remainder of the serine residue undergoes an oxidative deamination to produce ammonia and the pyruvoyl prosthetic group on the alpha chain. During this reaction, the Ser that is part of the protease active site of the proenzyme becomes the pyruvoyl prosthetic group, which constitutes an essential element of the active site of the mature decarboxylase.

It is found in the cell membrane. It carries out the reaction a 1,2-diacyl-sn-glycero-3-phospho-L-serine + H(+) = a 1,2-diacyl-sn-glycero-3-phosphoethanolamine + CO2. It participates in phospholipid metabolism; phosphatidylethanolamine biosynthesis; phosphatidylethanolamine from CDP-diacylglycerol: step 2/2. Its function is as follows. Catalyzes the formation of phosphatidylethanolamine (PtdEtn) from phosphatidylserine (PtdSer). In Helicobacter pylori (strain J99 / ATCC 700824) (Campylobacter pylori J99), this protein is Phosphatidylserine decarboxylase proenzyme.